The following is a 60-amino-acid chain: UPF0434 protein NMC0623 (60 aa).

The protein belongs to the UPF0434 family.

The protein is UPF0434 protein NMC0623 of Neisseria meningitidis serogroup C / serotype 2a (strain ATCC 700532 / DSM 15464 / FAM18).